The following is a 427-amino-acid chain: Enolase 2 (427 aa).

Q165 contributes to the (2R)-2-phosphoglycerate binding site. The active-site Proton donor is E207. Residues D244, E287, and D314 each contribute to the Mg(2+) site. K339, R368, S369, and K390 together coordinate (2R)-2-phosphoglycerate. The active-site Proton acceptor is K339.

It belongs to the enolase family. As to quaternary structure, component of the RNA degradosome, a multiprotein complex involved in RNA processing and mRNA degradation. Mg(2+) is required as a cofactor.

The protein resides in the cytoplasm. The protein localises to the secreted. It localises to the cell surface. The catalysed reaction is (2R)-2-phosphoglycerate = phosphoenolpyruvate + H2O. The protein operates within carbohydrate degradation; glycolysis; pyruvate from D-glyceraldehyde 3-phosphate: step 4/5. Its function is as follows. Catalyzes the reversible conversion of 2-phosphoglycerate (2-PG) into phosphoenolpyruvate (PEP). It is essential for the degradation of carbohydrates via glycolysis. This is Enolase 2 from Pseudomonas syringae pv. syringae (strain B728a).